A 499-amino-acid polypeptide reads, in one-letter code: Glutamate--tRNA ligase (499 aa).

The short motif at 12–22 is the 'HIGH' region element; it reads PSPTGHLHIGN. A 'KMSKS' region motif is present at residues 259 to 263; sequence KLSKR. Lys-262 contacts ATP.

It belongs to the class-I aminoacyl-tRNA synthetase family. Glutamate--tRNA ligase type 1 subfamily. In terms of assembly, monomer.

It localises to the cytoplasm. The enzyme catalyses tRNA(Glu) + L-glutamate + ATP = L-glutamyl-tRNA(Glu) + AMP + diphosphate. Catalyzes the attachment of glutamate to tRNA(Glu) in a two-step reaction: glutamate is first activated by ATP to form Glu-AMP and then transferred to the acceptor end of tRNA(Glu). This chain is Glutamate--tRNA ligase, found in Lactobacillus gasseri (strain ATCC 33323 / DSM 20243 / BCRC 14619 / CIP 102991 / JCM 1131 / KCTC 3163 / NCIMB 11718 / NCTC 13722 / AM63).